The sequence spans 243 residues: UPF0758 protein Tery_2667 (243 aa).

One can recognise an MPN domain in the interval 113-235 (VVESPQAAAD…HSSLRQITNL (123 aa)). His184, His186, and Asp197 together coordinate Zn(2+). The short motif at 184-197 (HNHPSGNVEPSPED) is the JAMM motif element.

This sequence belongs to the UPF0758 family.

This Trichodesmium erythraeum (strain IMS101) protein is UPF0758 protein Tery_2667.